A 176-amino-acid chain; its full sequence is MSITMRQKDLRPAPALIEYKGMKFLITDRPSDITINHYIMELKKNNVNTVVRVCEPSYNTDELETQGITVKDLAFEDGTFPPQQVVDEWFEVLKDKYQQNPEACVAVHCVAGLGRAPVLVALALIELGLKYEAAVEMIRDKRRGAINAKQLSFLEKYKPKARLKHKNGHKNSCSVQ.

The region spanning 13-166 (APALIEYKGM…YKPKARLKHK (154 aa)) is the Tyrosine-protein phosphatase domain. The active-site Phosphocysteine intermediate is Cys-109. Cys-173 is modified (cysteine methyl ester). Cys-173 carries the S-farnesyl cysteine lipid modification. Residues 174–176 (SVQ) constitute a propeptide, removed in mature form.

It belongs to the protein-tyrosine phosphatase family. As to quaternary structure, homotrimer. Interacts with uex, possibly at the plasma membrane. Expressed in the adult head (at protein level). Expressed in neurons in the antennal lobe and V-glomeruli (at protein level). Expressed in dorsocentral neurons (at protein level).

The protein resides in the cytoplasm. Its subcellular location is the cell membrane. It localises to the apicolateral cell membrane. It is found in the cell projection. The protein localises to the axon. The catalysed reaction is O-phospho-L-tyrosyl-[protein] + H2O = L-tyrosyl-[protein] + phosphate. Probable phosphatase. Inhibits growth possibly by negatively regulating Src64B-induced growth. Regulates central nervous system circuit formation and stabilization of synapse-dense terminal arbors. In dorsocentral neurons, regulates synaptogenesis in terminal arbors via modulation of the insulin receptor pathway, likely upstream of Akt1, and via reduction of PtdIns(4,5)P2 (Phosphatidylinositol 4,5-bisphosphate) levels. In the nervous system, plays a protective role together with uex in response to olfactory carbon dioxide stimulation. This is PRL-1 phosphatase from Drosophila melanogaster (Fruit fly).